The chain runs to 480 residues: Glycogen synthase 1 (480 aa).

Lysine 15 is an ADP-alpha-D-glucose binding site.

Belongs to the glycosyltransferase 1 family. Bacterial/plant glycogen synthase subfamily.

It carries out the reaction [(1-&gt;4)-alpha-D-glucosyl](n) + ADP-alpha-D-glucose = [(1-&gt;4)-alpha-D-glucosyl](n+1) + ADP + H(+). The protein operates within glycan biosynthesis; glycogen biosynthesis. Functionally, synthesizes alpha-1,4-glucan chains using ADP-glucose. This is Glycogen synthase 1 (glgA1) from Rhizobium meliloti (strain 1021) (Ensifer meliloti).